The primary structure comprises 289 residues: Serine/threonine-protein phosphatase Pgam5, mitochondrial (289 aa).

Residues 7-23 (FACGTGAGLLTFYLTKL) form a helical membrane-spanning segment.

Belongs to the phosphoglycerate mutase family. BPG-dependent PGAM subfamily. Interacts with Pk92B/ASK1.

The protein localises to the mitochondrion outer membrane. It catalyses the reaction O-phospho-L-seryl-[protein] + H2O = L-seryl-[protein] + phosphate. The catalysed reaction is O-phospho-L-threonyl-[protein] + H2O = L-threonyl-[protein] + phosphate. Displays phosphatase activity for serine/threonine residues, and dephosphorylates and activates Pk92B kinase. Has apparently no phosphoglycerate mutase activity. In Drosophila persimilis (Fruit fly), this protein is Serine/threonine-protein phosphatase Pgam5, mitochondrial.